The following is a 413-amino-acid chain: Histidine--tRNA ligase (413 aa).

The protein belongs to the class-II aminoacyl-tRNA synthetase family. In terms of assembly, homodimer.

Its subcellular location is the cytoplasm. The enzyme catalyses tRNA(His) + L-histidine + ATP = L-histidyl-tRNA(His) + AMP + diphosphate + H(+). The polypeptide is Histidine--tRNA ligase (Wolbachia sp. subsp. Brugia malayi (strain TRS)).